Consider the following 35-residue polypeptide: Thaumatin-like protein 6 (35 aa).

Belongs to the thaumatin family.

This Glebionis coronaria (Crown daisy) protein is Thaumatin-like protein 6.